We begin with the raw amino-acid sequence, 150 residues long: Monooxygenase dmxR10 (150 aa).

This sequence belongs to the avfA family.

Its pathway is secondary metabolite biosynthesis. Functionally, monooxygenase; part of the gene cluster that mediates the biosynthesis of the dimeric xanthones cryptosporioptides. The pathway begins with the synthesis of atrochrysone thioester by the polyketide synthase dmx-nrPKS. The atrochrysone carboxyl ACP thioesterase dmxR1 then breaks the thioester bond and releases the atrochrysone carboxylic acid from dmx-nrPKS. Atrochrysone carboxylic acid is decarboxylated by the decarboxylase dmxR15, and oxidized by the anthrone oxygenase dmxR16 to yield emodin. Emodin is then reduced to emodin hydroquinone by the oxidoreductase dmxR7. A-ring reduction by the short chain dehydrogenase dmxR18, dehydration by the scytalone dehydratase-like protein dmxR17 and probable spontaneous re-oxidation, results in overall deoxygenation to chrysophanol. Baeyer-Villiger oxidation by the Baeyer-Villiger monooxygenase (BVMO) dmxR6 then yields monodictylactone in equilibrium with monodictyphenone. In the case of the cryptosporioptides biosynthesis, monodictylactone is reduced at C-12 to an alcohol (by the short chain dehydrogenases dmxR12 or dmxR8) and hydroxylated at C-5 by dmxR9, yielding the electron-rich aromatic which could eliminate H(2)O to form the ortho-quinonemethide, followed by tautomerisation to paraquinone and complete the formal reduction to produce the 10-methylgroup. Conjugate addition of C-4a-OH to the resulting paraquinone by the monooxygenase dmxR10 then gives cyclohexadienone, which is then reduced at C-5 by the short chain dehydrogenase dmxR3 to give the dihydroxanthone. The 6,7-epoxide in the cryptosporioptides could be introduced by the cytochrome P450 monooxygenase dmxL3. The highly reducing PKS dmxL2 manufactures butyrate, which is further carboxylated by dmxL1 to form ethylmalonate. It is not yet clear whether the carboxylation occurs while the butyrate is attached to the ACP of dmxL2, but this unusual fungal metabolite could then be esterified to O-5 by the O-acetyltransferase dmxR13. Finally, dimerization performed by dmxR5 gives the observed dimers cryptosporioptides A, B and C as the final products of the pathway. The polypeptide is Monooxygenase dmxR10 (Cryptosporiopsis sp. (strain 8999)).